Reading from the N-terminus, the 292-residue chain is Short chain dehydrogenases/reductase notP' (292 aa).

The interval 1–25 is disordered; that stretch reads MPQTSDGNVHAPQYREAKPSQGDPS. NADP(+) is bound by residues Leu48, Asp97, Lys158, Tyr193, Lys197, Ile230, and Thr232. Tyr193 acts as the Proton donor in catalysis. Residue Lys197 is the Lowers pKa of active site Tyr of the active site.

Belongs to the short-chain dehydrogenases/reductases (SDR) family.

In terms of biological role, short chain dehydrogenases/reductase; part of the gene cluster that mediates the biosynthesis of notoamide, a fungal indole alkaloid that belongs to a family of natural products containing a characteristic bicyclo[2.2.2]diazaoctane core. The first step of notoamide biosynthesis involves coupling of L-proline and L-tryptophan by the bimodular NRPS notE', to produce cyclo-L-tryptophan-L-proline called brevianamide F. The reverse prenyltransferase notF' then acts as a deoxybrevianamide E synthase and converts brevianamide F to deoxybrevianamide E via reverse prenylation at C-2 of the indole ring leading to the bicyclo[2.2.2]diazaoctane core. Deoxybrevianamide E is further hydroxylated at C-6 of the indole ring, likely catalyzed by the cytochrome P450 monooxygenase notG', to yield 6-hydroxy-deoxybrevianamide E. 6-hydroxy-deoxybrevianamide E is a specific substrate of the prenyltransferase notC' for normal prenylation at C-7 to produce 6-hydroxy-7-prenyl-deoxybrevianamide, also called notoamide S. As the proposed pivotal branching point in notoamide biosynthesis, notoamide S can be diverted to notoamide E through an oxidative pyran ring closure putatively catalyzed by either notH' cytochrome P450 monooxygenase or the notD' FAD-linked oxidoreductase. This step would be followed by an indole 2,3-epoxidation-initiated pinacol-like rearrangement catalyzed by the notB' FAD-dependent monooxygenase leading to the formation of notoamide C and notoamide D. On the other hand notoamide S is converted to notoamide T by notH' (or notD'), a bifunctional oxidase that also functions as the intramolecular Diels-Alderase responsible for generation of (-)-notoamide T. To generate antipodal (+)-notoaminide T, notH (or notD) in Aspergillus strain MF297-2 is expected to catalyze a Diels-Alder reaction leading to the opposite stereochemistry. The remaining oxidoreductase notD' (or notH') likely catalyzes the oxidative pyran ring formation to yield (-)-stephacidin A. The FAD-dependent monooxygenase notI' is highly similar to notB' and is predicted to catalyze a similar conversion from (-)-stephacidin A to (+)-notoamide B via the 2,3-epoxidation of (-)-stephacidin A followed by a pinacol-type rearrangement. Finally, it remains unclear which enzyme could be responsible for the final hydroxylation steps leading to notoamide A and sclerotiamide. The function of notP' in the notoamide biosynthesis has not been determined yet. The polypeptide is Short chain dehydrogenases/reductase notP' (Aspergillus versicolor).